The following is a 476-amino-acid chain: ATP synthase subunit beta (476 aa).

152–159 is an ATP binding site; it reads GGAGVGKT.

The protein belongs to the ATPase alpha/beta chains family. F-type ATPases have 2 components, CF(1) - the catalytic core - and CF(0) - the membrane proton channel. CF(1) has five subunits: alpha(3), beta(3), gamma(1), delta(1), epsilon(1). CF(0) has three main subunits: a(1), b(2) and c(9-12). The alpha and beta chains form an alternating ring which encloses part of the gamma chain. CF(1) is attached to CF(0) by a central stalk formed by the gamma and epsilon chains, while a peripheral stalk is formed by the delta and b chains.

Its subcellular location is the cell inner membrane. It catalyses the reaction ATP + H2O + 4 H(+)(in) = ADP + phosphate + 5 H(+)(out). Produces ATP from ADP in the presence of a proton gradient across the membrane. The catalytic sites are hosted primarily by the beta subunits. In Acidiphilium cryptum (strain JF-5), this protein is ATP synthase subunit beta.